A 342-amino-acid polypeptide reads, in one-letter code: Holliday junction branch migration complex subunit RuvB (342 aa).

Residues 1-179 (MTNILSPEKS…FGIPMRLNFY (179 aa)) form a large ATPase domain (RuvB-L) region. Residues I18, R19, G60, K63, T64, T65, 126-128 (EDF), R169, Y179, and R216 contribute to the ATP site. T64 contributes to the Mg(2+) binding site. The segment at 180-250 (NTEELKQVLN…ICDFGLKRLT (71 aa)) is small ATPAse domain (RuvB-S). The interval 253 to 342 (SIGLDSNDYR…HQFNILNENE (90 aa)) is head domain (RuvB-H). DNA-binding residues include R289, R308, and R313.

The protein belongs to the RuvB family. In terms of assembly, homohexamer. Forms an RuvA(8)-RuvB(12)-Holliday junction (HJ) complex. HJ DNA is sandwiched between 2 RuvA tetramers; dsDNA enters through RuvA and exits via RuvB. An RuvB hexamer assembles on each DNA strand where it exits the tetramer. Each RuvB hexamer is contacted by two RuvA subunits (via domain III) on 2 adjacent RuvB subunits; this complex drives branch migration. In the full resolvosome a probable DNA-RuvA(4)-RuvB(12)-RuvC(2) complex forms which resolves the HJ.

The protein localises to the cytoplasm. The enzyme catalyses ATP + H2O = ADP + phosphate + H(+). The RuvA-RuvB-RuvC complex processes Holliday junction (HJ) DNA during genetic recombination and DNA repair, while the RuvA-RuvB complex plays an important role in the rescue of blocked DNA replication forks via replication fork reversal (RFR). RuvA specifically binds to HJ cruciform DNA, conferring on it an open structure. The RuvB hexamer acts as an ATP-dependent pump, pulling dsDNA into and through the RuvAB complex. RuvB forms 2 homohexamers on either side of HJ DNA bound by 1 or 2 RuvA tetramers; 4 subunits per hexamer contact DNA at a time. Coordinated motions by a converter formed by DNA-disengaged RuvB subunits stimulates ATP hydrolysis and nucleotide exchange. Immobilization of the converter enables RuvB to convert the ATP-contained energy into a lever motion, pulling 2 nucleotides of DNA out of the RuvA tetramer per ATP hydrolyzed, thus driving DNA branch migration. The RuvB motors rotate together with the DNA substrate, which together with the progressing nucleotide cycle form the mechanistic basis for DNA recombination by continuous HJ branch migration. Branch migration allows RuvC to scan DNA until it finds its consensus sequence, where it cleaves and resolves cruciform DNA. This chain is Holliday junction branch migration complex subunit RuvB, found in Rickettsia typhi (strain ATCC VR-144 / Wilmington).